Here is a 38-residue protein sequence, read N- to C-terminus: Photosystem II reaction center protein L (38 aa).

A helical transmembrane segment spans residues 17–37 (SLYWGLLLIFVLAVLFSSYIF).

This sequence belongs to the PsbL family. In terms of assembly, PSII is composed of 1 copy each of membrane proteins PsbA, PsbB, PsbC, PsbD, PsbE, PsbF, PsbH, PsbI, PsbJ, PsbK, PsbL, PsbM, PsbT, PsbX, PsbY, PsbZ, Psb30/Ycf12, at least 3 peripheral proteins of the oxygen-evolving complex and a large number of cofactors. It forms dimeric complexes.

The protein resides in the plastid. It is found in the chloroplast thylakoid membrane. Functionally, one of the components of the core complex of photosystem II (PSII). PSII is a light-driven water:plastoquinone oxidoreductase that uses light energy to abstract electrons from H(2)O, generating O(2) and a proton gradient subsequently used for ATP formation. It consists of a core antenna complex that captures photons, and an electron transfer chain that converts photonic excitation into a charge separation. This subunit is found at the monomer-monomer interface and is required for correct PSII assembly and/or dimerization. The protein is Photosystem II reaction center protein L of Ostreococcus tauri.